Reading from the N-terminus, the 384-residue chain is Dual-specificity RNA methyltransferase RlmN (384 aa).

The active-site Proton acceptor is Glu-105. The Radical SAM core domain maps to 111–350 (EDDRATLCVS…TIVRKTRGDD (240 aa)). A disulfide bridge connects residues Cys-118 and Cys-355. Residues Cys-125, Cys-129, and Cys-132 each coordinate [4Fe-4S] cluster. Residues 179 to 180 (GE), Ser-211, 233 to 235 (SLH), and Asn-312 each bind S-adenosyl-L-methionine. Cys-355 acts as the S-methylcysteine intermediate in catalysis.

The protein belongs to the radical SAM superfamily. RlmN family. Requires [4Fe-4S] cluster as cofactor.

It localises to the cytoplasm. It catalyses the reaction adenosine(2503) in 23S rRNA + 2 reduced [2Fe-2S]-[ferredoxin] + 2 S-adenosyl-L-methionine = 2-methyladenosine(2503) in 23S rRNA + 5'-deoxyadenosine + L-methionine + 2 oxidized [2Fe-2S]-[ferredoxin] + S-adenosyl-L-homocysteine. The enzyme catalyses adenosine(37) in tRNA + 2 reduced [2Fe-2S]-[ferredoxin] + 2 S-adenosyl-L-methionine = 2-methyladenosine(37) in tRNA + 5'-deoxyadenosine + L-methionine + 2 oxidized [2Fe-2S]-[ferredoxin] + S-adenosyl-L-homocysteine. In terms of biological role, specifically methylates position 2 of adenine 2503 in 23S rRNA and position 2 of adenine 37 in tRNAs. m2A2503 modification seems to play a crucial role in the proofreading step occurring at the peptidyl transferase center and thus would serve to optimize ribosomal fidelity. The sequence is that of Dual-specificity RNA methyltransferase RlmN from Escherichia coli O6:H1 (strain CFT073 / ATCC 700928 / UPEC).